The sequence spans 458 residues: MYVPEEIIETIKMIEYQNLDIRTTTLGVNLKDCADKDLDLLKENIYNKITSYGGNLVETANKVSQKYGIPIVNKRISVTPIGLIMGSTLKGLSDEEAIDACVEVGITLDNIAKEVGVDFIGGYSALVQKRATPEEKMLIRSIPKLMTKTDRVCASVNVATTKAGINMYAVKKMGEIVKETSEITKDAIGCAKIVVFCNAPEDNPFMAGAFHGPGEGDAVINAGVSGPGVVRAVVEQLKGKDIGTVSDEIKKTAFKITRMGELVGKEVASELGVDFGIVDLSLAPTPAIGDSIANILEAVGLERCGTHGTTAALAMLNDAVKKGGAMASSNVGGLSGAFIPVSEDAGMIEAVEVGALRLEKLEAMTCVCSVGLDMIAVPGKTPASTLSAIIADEMAIGMINKKTTAVRIIPVPGKDVGDSVEYGGLLGTAPIMPVSEFSSEEFIERGGRIPAPIQSLTN.

It belongs to the UPF0210 family.

The sequence is that of UPF0210 protein MmarC6_1246 from Methanococcus maripaludis (strain C6 / ATCC BAA-1332).